We begin with the raw amino-acid sequence, 834 residues long: Copper-exporting P-type ATPase (834 aa).

Over 2 to 186 (SQTIDLTLDG…TAVATMKRFR (185 aa)) the chain is Cytoplasmic. HMA domains are found at residues 3–64 (QTID…YDAS) and 99–162 (DSQQ…YGAE). Cu(+) is bound by residues Cys14, Cys17, Cys110, and Cys113. 2 short sequence motifs (CXXC motif) span residues 14 to 17 (CGHC) and 110 to 113 (CASC). A helical transmembrane segment spans residues 187-207 (WQAIVALAVGIPVMVWGMIGD). Topologically, residues 208–217 (NMMVTADNRS) are periplasmic; loop 1. Residues 218-238 (LWLVIGLITLAVMVFAGGHFY) traverse the membrane as a helical segment. Residues 239-253 (RSAWKSLLNGAATMD) lie on the Cytoplasmic side of the membrane. Residues 254–274 (TLVALGTGVAWLYSMSVNLWP) form a helical membrane-spanning segment. The Periplasmic; loop 2 portion of the chain corresponds to 275 to 283 (QWFPMEARH). Residues 284–304 (LYYEASAMIIGLINLGHMLEA) traverse the membrane as a helical segment. At 305-437 (RARQRSSKAL…EIGQLADKIS (133 aa)) the chain is on the cytoplasmic side. A helical membrane pass occupies residues 438-458 (AVFVPVVVVIALVSAAIWYFF). The Periplasmic; loop 3 portion of the chain corresponds to 459 to 463 (GPAPQ). The helical transmembrane segment at 464 to 484 (IVYTLVIATTVLIIACPCALG) threads the bilayer. Over 485–778 (LATPMSIISG…ATLHNMKQNL (294 aa)) the chain is Cytoplasmic. Asp523 (4-aspartylphosphate intermediate) is an active-site residue. 2 residues coordinate Mg(2+): Asp720 and Asp724. The helical transmembrane segment at 779-799 (LGAFIYNSIGIPVAAGILWPF) threads the bilayer. Residue Thr800 is a topological domain, periplasmic; loop 4. The chain crosses the membrane as a helical span at residues 801–821 (GTLLNPVVAGAAMALSSITVV). Over 822-834 (SNANRLLRFKPKE) the chain is Cytoplasmic.

This sequence belongs to the cation transport ATPase (P-type) (TC 3.A.3) family. Type IB subfamily. Copper-exporting P-type ATPase interacts with apo-periplasmic copper chaperone CusF; when CusF is precharged with copper it binds very little CopA. The periplasmic loops of CopA, especially the first half of loop 1, play a large role in binding to CusF.

The protein resides in the cell inner membrane. The protein localises to the cytoplasm. The enzyme catalyses Cu(+)(in) + ATP + H2O = Cu(+)(out) + ADP + phosphate + H(+). Export is inhibited by vanadate. Phosphorylation is inhibited by vanadate and sensitive to KOH and hydroxylamine; it is not inhibited by azide. Phosphorylation is Cu(+) not Cu(2+)-dependent. ATPase activity is inhibited by bathocuproindisulfonate (BCDS), which chelates Cu(+) but not Cu(2+), and stimulated 3-4-fold by Cu(+). ATPase activity is inhibited by Cu(2+) plus DTT or Ag(+). Its function is as follows. Exports Cu(+) from the cytoplasm to the periplasm. Binds 2 Cu(+) ions per monomer, which are transferred to periplasmic copper chaperone CusF upon ATP hydrolysis. In vitro an excess of CusF over CopA is required for efficient transfer. May also be involved in silver export. Functionally, mRNA is subject to programmed ribosomal frameshifting which produces a cytoplasmic copper chaperone CopA(Z) that corresponds to the first HMA domain. The soluble form is essential for cell survivial in the presence of CuSO(4); in growth competition experiments between wild-type and a version that prevents expression of CopA(Z) after 50 generations the non-CopA(Z) version is nearly extinct. The first HMA domain (residues 1-70) can be replaced by B.subtilis Cu chaperone CopZ. This Escherichia coli (strain K12) protein is Copper-exporting P-type ATPase.